The chain runs to 225 residues: ATP-dependent Clp protease proteolytic subunit (225 aa).

Ser126 acts as the Nucleophile in catalysis. Residue His151 is part of the active site.

This sequence belongs to the peptidase S14 family. Fourteen ClpP subunits assemble into 2 heptameric rings which stack back to back to give a disk-like structure with a central cavity, resembling the structure of eukaryotic proteasomes.

It is found in the cytoplasm. The catalysed reaction is Hydrolysis of proteins to small peptides in the presence of ATP and magnesium. alpha-casein is the usual test substrate. In the absence of ATP, only oligopeptides shorter than five residues are hydrolyzed (such as succinyl-Leu-Tyr-|-NHMec, and Leu-Tyr-Leu-|-Tyr-Trp, in which cleavage of the -Tyr-|-Leu- and -Tyr-|-Trp bonds also occurs).. Functionally, cleaves peptides in various proteins in a process that requires ATP hydrolysis. Has a chymotrypsin-like activity. Plays a major role in the degradation of misfolded proteins. This Psychrobacter arcticus (strain DSM 17307 / VKM B-2377 / 273-4) protein is ATP-dependent Clp protease proteolytic subunit.